The sequence spans 407 residues: Methylenetetrahydrofolate--tRNA-(uracil-5-)-methyltransferase TrmFO (407 aa).

FAD is bound at residue 9 to 14 (GAGLAG).

Belongs to the MnmG family. TrmFO subfamily. FAD is required as a cofactor.

It localises to the cytoplasm. It catalyses the reaction uridine(54) in tRNA + (6R)-5,10-methylene-5,6,7,8-tetrahydrofolate + NADH + H(+) = 5-methyluridine(54) in tRNA + (6S)-5,6,7,8-tetrahydrofolate + NAD(+). The enzyme catalyses uridine(54) in tRNA + (6R)-5,10-methylene-5,6,7,8-tetrahydrofolate + NADPH + H(+) = 5-methyluridine(54) in tRNA + (6S)-5,6,7,8-tetrahydrofolate + NADP(+). Functionally, catalyzes the folate-dependent formation of 5-methyl-uridine at position 54 (M-5-U54) in all tRNAs. The protein is Methylenetetrahydrofolate--tRNA-(uracil-5-)-methyltransferase TrmFO of Lactobacillus helveticus (strain DPC 4571).